A 190-amino-acid chain; its full sequence is Ribosome-recycling factor (190 aa).

It belongs to the RRF family.

It is found in the cytoplasm. In terms of biological role, responsible for the release of ribosomes from messenger RNA at the termination of protein biosynthesis. May increase the efficiency of translation by recycling ribosomes from one round of translation to another. In Fusobacterium nucleatum subsp. nucleatum (strain ATCC 25586 / DSM 15643 / BCRC 10681 / CIP 101130 / JCM 8532 / KCTC 2640 / LMG 13131 / VPI 4355), this protein is Ribosome-recycling factor.